A 231-amino-acid polypeptide reads, in one-letter code: 2-C-methyl-D-erythritol 4-phosphate cytidylyltransferase (231 aa).

Belongs to the IspD/TarI cytidylyltransferase family. IspD subfamily.

The enzyme catalyses 2-C-methyl-D-erythritol 4-phosphate + CTP + H(+) = 4-CDP-2-C-methyl-D-erythritol + diphosphate. Its pathway is isoprenoid biosynthesis; isopentenyl diphosphate biosynthesis via DXP pathway; isopentenyl diphosphate from 1-deoxy-D-xylulose 5-phosphate: step 2/6. In terms of biological role, catalyzes the formation of 4-diphosphocytidyl-2-C-methyl-D-erythritol from CTP and 2-C-methyl-D-erythritol 4-phosphate (MEP). The protein is 2-C-methyl-D-erythritol 4-phosphate cytidylyltransferase of Clostridium novyi (strain NT).